The following is a 95-amino-acid chain: Small ribosomal subunit protein bS18 (95 aa).

The protein belongs to the bacterial ribosomal protein bS18 family. Part of the 30S ribosomal subunit. Forms a tight heterodimer with protein bS6.

Binds as a heterodimer with protein bS6 to the central domain of the 16S rRNA, where it helps stabilize the platform of the 30S subunit. In Rickettsia akari (strain Hartford), this protein is Small ribosomal subunit protein bS18.